A 457-amino-acid polypeptide reads, in one-letter code: Adenylosuccinate synthetase (457 aa).

GTP contacts are provided by residues 40-46 (GDEGKGK) and 70-72 (GHT). Aspartate 41 (proton acceptor) is an active-site residue. Aspartate 41 and glycine 70 together coordinate Mg(2+). IMP is bound by residues 41–44 (DEGK), 68–71 (NAGH), threonine 161, arginine 175, asparagine 255, threonine 270, and arginine 334. The active-site Proton donor is histidine 71. 330 to 336 (VTTGRKR) is a binding site for substrate. GTP is bound by residues arginine 336, 362 to 364 (KLD), and 444 to 446 (GVG).

This sequence belongs to the adenylosuccinate synthetase family. Homodimer. The cofactor is Mg(2+).

It is found in the cytoplasm. The enzyme catalyses IMP + L-aspartate + GTP = N(6)-(1,2-dicarboxyethyl)-AMP + GDP + phosphate + 2 H(+). Its pathway is purine metabolism; AMP biosynthesis via de novo pathway; AMP from IMP: step 1/2. Functionally, plays an important role in the de novo pathway and in the salvage pathway of purine nucleotide biosynthesis. Catalyzes the first committed step in the biosynthesis of AMP from IMP. This Caenorhabditis elegans protein is Adenylosuccinate synthetase.